Here is a 137-residue protein sequence, read N- to C-terminus: Nucleoside diphosphate kinase (137 aa).

6 residues coordinate ATP: K9, F58, R86, T92, R103, and N113. H121 functions as the Pros-phosphohistidine intermediate in the catalytic mechanism.

This sequence belongs to the NDK family. In terms of assembly, homotetramer. The cofactor is Mg(2+).

It is found in the cytoplasm. The catalysed reaction is a 2'-deoxyribonucleoside 5'-diphosphate + ATP = a 2'-deoxyribonucleoside 5'-triphosphate + ADP. It catalyses the reaction a ribonucleoside 5'-diphosphate + ATP = a ribonucleoside 5'-triphosphate + ADP. Functionally, major role in the synthesis of nucleoside triphosphates other than ATP. The ATP gamma phosphate is transferred to the NDP beta phosphate via a ping-pong mechanism, using a phosphorylated active-site intermediate. The polypeptide is Nucleoside diphosphate kinase (Streptococcus pneumoniae (strain Hungary19A-6)).